The chain runs to 1178 residues: Phytochrome B (1178 aa).

Positions 1-15 (MASGSRATPTRSPSS) are enriched in polar residues. Positions 1 to 58 (MASGSRATPTRSPSSARPEAPRHAHHHHHHHSQSSGGSTSRAGGGGGGGGGGGGTAAT) are disordered. The span at 23–32 (HAHHHHHHHS) shows a compositional bias: basic residues. A compositionally biased stretch (gly residues) spans 42 to 55 (AGGGGGGGGGGGGT). A GAF domain is found at 267–449 (DIKLLCDTVV…AFGLQLNMEL (183 aa)). Cys372 serves as a coordination point for phytochromobilin. PAS domains lie at 668–739 (VARE…LRGE) and 802–873 (DYKA…MVVI). A Histidine kinase domain is found at 950–1170 (YICQEIKNPL…LIVLELPQPR (221 aa)).

It belongs to the phytochrome family. Homodimer. In terms of processing, contains one covalently linked phytochromobilin chromophore.

Regulatory photoreceptor which exists in two forms that are reversibly interconvertible by light: the Pr form that absorbs maximally in the red region of the spectrum and the Pfr form that absorbs maximally in the far-red region. Photoconversion of Pr to Pfr induces an array of morphogenic responses, whereas reconversion of Pfr to Pr cancels the induction of those responses. Pfr controls the expression of a number of nuclear genes including those encoding the small subunit of ribulose-bisphosphate carboxylase, chlorophyll A/B binding protein, protochlorophyllide reductase, rRNA, etc. It also controls the expression of its own gene(s) in a negative feedback fashion. In Sorghum bicolor (Sorghum), this protein is Phytochrome B (PHYB).